A 258-amino-acid polypeptide reads, in one-letter code: uncharacterized protein (258 aa).

This is an uncharacterized protein from Acidianus filamentous virus 2 (isolate Italy/Pozzuoli) (AFV-2).